The primary structure comprises 502 residues: MPSSSPRKNIRVLFVTPEVFPLCKTGGLGDVSAALPVALRALKMDARLLLPGYPAVLAGLKSRRKVATFDLQPHFPPATLLSSRLQINESVSVPLYVIHCPALYQRTGGIYLDDTGQDWPDNAQRFGLLSKIGALLASDASPLAWVPDIVHCNDWQSGLTPAYLHFHSGKKAASLITLHNLAFQGNFPSDEVAKLGLPDESFSMHGAEFYGNLSFLKAGIYYSDHISTVSPGYAREIQQEPLGFGLQGLLAKRSDDITGIVNGIDTAIWNPATDPYLVKKYTSRNLSAKAANKLALQQTMGLENNQAIPLFGTVSRLTHQKGSDIMLQVAPMLADLPAQLALLGSGDALLEQQLAALAQAFPTKIAVRIGYDEALSHLINAGTDCFLMPSRFEPCGLNQMYSQHYGTPPVVHATGGLMDTVVDLTPETLADKSASGFHFHEMTADSFMEGIKRAINAYHNTRLWKNLQRNGMQKDFSWQASASAYQSIYSLLMQKNRPASTA.

Residue lysine 24 participates in ADP-alpha-D-glucose binding.

Belongs to the glycosyltransferase 1 family. Bacterial/plant glycogen synthase subfamily.

The enzyme catalyses [(1-&gt;4)-alpha-D-glucosyl](n) + ADP-alpha-D-glucose = [(1-&gt;4)-alpha-D-glucosyl](n+1) + ADP + H(+). The protein operates within glycan biosynthesis; glycogen biosynthesis. Functionally, synthesizes alpha-1,4-glucan chains using ADP-glucose. The polypeptide is Glycogen synthase (Nitrosomonas eutropha (strain DSM 101675 / C91 / Nm57)).